Reading from the N-terminus, the 300-residue chain is Putative S-adenosyl-L-methionine-dependent methyltransferase MUL_0817 (300 aa).

S-adenosyl-L-methionine-binding positions include aspartate 127 and 156 to 157; that span reads DL.

This sequence belongs to the UPF0677 family.

In terms of biological role, exhibits S-adenosyl-L-methionine-dependent methyltransferase activity. The polypeptide is Putative S-adenosyl-L-methionine-dependent methyltransferase MUL_0817 (Mycobacterium ulcerans (strain Agy99)).